The sequence spans 525 residues: Serine/threonine protein phosphatase 2A 55 kDa regulatory subunit B beta isoform (525 aa).

Positions 1 to 30 are disordered; it reads MDPSSKSPDDDDLRPEAEAARRPQPQPQPR. WD repeat units lie at residues 48–87 and 124–165; these read QEVD…DSAS and EIEE…VKRI. The segment at 169–191 is disordered; it reads NLNTSQSSGNGTTSSSSSSSSRA. Low complexity predominate over residues 171–189; that stretch reads NTSQSSGNGTTSSSSSSSS. WD repeat units lie at residues 244 to 282, 293 to 333, 352 to 390, and 495 to 525; these read AHDY…QSFN, DLTE…LCDN, EIIA…GPVA, and DLST…MYYA.

It belongs to the phosphatase 2A regulatory subunit B family. In terms of assembly, PP2A consists of a common heteromeric enzyme, composed of a catalytic subunit (subunits C), a constant regulatory subunit (subunit A), and a variety of regulatory subunits such as subunits B (the R2/B/PR55/B55, R3/B''/PR72/PR130/PR59 and R5/B'/B56 families).

Its function is as follows. The B regulatory subunit may modulate substrate selectivity and catalytic activity, and may also direct the localization of the catalytic enzyme to a particular subcellular compartment. The sequence is that of Serine/threonine protein phosphatase 2A 55 kDa regulatory subunit B beta isoform from Oryza sativa subsp. japonica (Rice).